A 117-amino-acid polypeptide reads, in one-letter code: UPF0251 protein DehaBAV1_0135 (117 aa).

It belongs to the UPF0251 family.

The polypeptide is UPF0251 protein DehaBAV1_0135 (Dehalococcoides mccartyi (strain ATCC BAA-2100 / JCM 16839 / KCTC 5957 / BAV1)).